The following is a 581-amino-acid chain: NADH-quinone oxidoreductase subunit C/D (581 aa).

Residues 1–172 (MSGTDLVSEL…PLFNMTAALF (172 aa)) form an NADH dehydrogenase I subunit C region. Residues 196–581 (ELMILNYGPH…IDYVMSDVDR (386 aa)) are NADH dehydrogenase I subunit D.

This sequence in the N-terminal section; belongs to the complex I 30 kDa subunit family. It in the C-terminal section; belongs to the complex I 49 kDa subunit family. In terms of assembly, NDH-1 is composed of 13 different subunits. Subunits NuoB, CD, E, F, and G constitute the peripheral sector of the complex.

It localises to the cell inner membrane. It catalyses the reaction a quinone + NADH + 5 H(+)(in) = a quinol + NAD(+) + 4 H(+)(out). Its function is as follows. NDH-1 shuttles electrons from NADH, via FMN and iron-sulfur (Fe-S) centers, to quinones in the respiratory chain. The immediate electron acceptor for the enzyme in this species is believed to be ubiquinone. Couples the redox reaction to proton translocation (for every two electrons transferred, four hydrogen ions are translocated across the cytoplasmic membrane), and thus conserves the redox energy in a proton gradient. This Rhodopseudomonas palustris (strain BisB5) protein is NADH-quinone oxidoreductase subunit C/D.